A 192-amino-acid polypeptide reads, in one-letter code: MPRSAVVERRTKETEVKVELSLEPGEVNVDTPVKFLNHMVETLIFYMGASGRVKAIDLRGFDDHHVVEDVAIVLGSTLDKALGDRTGLARFGWAIIPMDDALTLASVDLGGRVYFMFKGSFTRETVGDMATEMVPHFIRSLASSLRATIHVNVMWGENNHHIAESVFKALGLAIGQAIQVKGGGVPSLKGVL.

The protein belongs to the imidazoleglycerol-phosphate dehydratase family.

Its subcellular location is the cytoplasm. The catalysed reaction is D-erythro-1-(imidazol-4-yl)glycerol 3-phosphate = 3-(imidazol-4-yl)-2-oxopropyl phosphate + H2O. It participates in amino-acid biosynthesis; L-histidine biosynthesis; L-histidine from 5-phospho-alpha-D-ribose 1-diphosphate: step 6/9. This is Imidazoleglycerol-phosphate dehydratase from Caldivirga maquilingensis (strain ATCC 700844 / DSM 13496 / JCM 10307 / IC-167).